The sequence spans 277 residues: Methyltransferase adrK (277 aa).

S-adenosyl-L-methionine is bound by residues 123–124, 150–151, and 151–152; these read DL, DV, and VL.

The protein belongs to the class I-like SAM-binding methyltransferase superfamily. In terms of assembly, homodimer.

It participates in secondary metabolite biosynthesis; terpenoid biosynthesis. In terms of biological role, methyltransferase; part of the gene cluster that mediates the biosynthesis of andrastins, meroterpenoid compounds that exhibit inhibitory activity against ras farnesyltransferase, suggesting that they could be promising leads for antitumor agents. The first step of the pathway is the synthesis of 3,5-dimethylorsellinic acid (DMOA) by the polyketide synthase adrD via condensation of one acetyl-CoA starter unit with 3 malonyl-CoA units and 2 methylations. DMAO is then converted to farnesyl-DMAO by the prenyltransferase adrG. The methyltransferase adrK catalyzes the methylation of the carboxyl group of farnesyl-DMAO to farnesyl-DMAO methyl ester which is further converted to epoxyfarnesyl-DMAO methyl ester by the FAD-dependent monooxygenase adrH. The terpene cyclase adrI then catalyzes the carbon skeletal rearrangement to generate the andrastin E, the first compound in the pathway having the andrastin scaffold, with the tetracyclic ring system. The post-cyclization tailoring enzymes adrF, adrE, adrJ, and adrA, are involved in the conversion of andrastin E into andrastin A. The short chain dehydrogenase adrF is responsible for the oxidation of the C-3 a hydroxyl group of andrastin E to yield the corresponding ketone, andrastin D. The ketoreductase adrE stereoselectively reduces the carbonyl moiety to reverse the stereochemistry of the C-3 position to yield andrastin F. The acetyltransferase adrJ is the acetyltransferase that attaches the acetyl group to the C-3 hydroxyl group of andrastin F to yield andrastin C. Finally, the cytochrome P450 monooxygenase adrA catalyzes two sequential oxidation reactions of the C-23 methyl group, to generate the corresponding alcohol andrastin B, and aldehyde andrastin A. This chain is Methyltransferase adrK, found in Penicillium rubens (strain ATCC 28089 / DSM 1075 / NRRL 1951 / Wisconsin 54-1255) (Penicillium chrysogenum).